The following is a 226-amino-acid chain: Phosphatidylserine decarboxylase proenzyme (226 aa).

Ser-184 (schiff-base intermediate with substrate; via pyruvic acid) is an active-site residue. Ser-184 carries the pyruvic acid (Ser); by autocatalysis modification.

The protein belongs to the phosphatidylserine decarboxylase family. PSD-A subfamily. As to quaternary structure, heterodimer of a large membrane-associated beta subunit and a small pyruvoyl-containing alpha subunit. Requires pyruvate as cofactor. Is synthesized initially as an inactive proenzyme. Formation of the active enzyme involves a self-maturation process in which the active site pyruvoyl group is generated from an internal serine residue via an autocatalytic post-translational modification. Two non-identical subunits are generated from the proenzyme in this reaction, and the pyruvate is formed at the N-terminus of the alpha chain, which is derived from the carboxyl end of the proenzyme. The post-translation cleavage follows an unusual pathway, termed non-hydrolytic serinolysis, in which the side chain hydroxyl group of the serine supplies its oxygen atom to form the C-terminus of the beta chain, while the remainder of the serine residue undergoes an oxidative deamination to produce ammonia and the pyruvoyl prosthetic group on the alpha chain.

It localises to the cell membrane. It carries out the reaction a 1,2-diacyl-sn-glycero-3-phospho-L-serine + H(+) = a 1,2-diacyl-sn-glycero-3-phosphoethanolamine + CO2. Its pathway is phospholipid metabolism; phosphatidylethanolamine biosynthesis; phosphatidylethanolamine from CDP-diacylglycerol: step 2/2. Functionally, catalyzes the formation of phosphatidylethanolamine (PtdEtn) from phosphatidylserine (PtdSer). This is Phosphatidylserine decarboxylase proenzyme from Ehrlichia chaffeensis (strain ATCC CRL-10679 / Arkansas).